The chain runs to 150 residues: FAD synthase (150 aa).

ATP-binding positions include 20 to 21 (TF), 25 to 28 (HPGH), and D103.

This sequence belongs to the archaeal FAD synthase family. Homodimer. A divalent metal cation serves as cofactor.

The enzyme catalyses FMN + ATP + H(+) = FAD + diphosphate. It functions in the pathway cofactor biosynthesis; FAD biosynthesis; FAD from FMN: step 1/1. Its function is as follows. Catalyzes the transfer of the AMP portion of ATP to flavin mononucleotide (FMN) to produce flavin adenine dinucleotide (FAD) coenzyme. In Methanohalobium evestigatum (strain ATCC BAA-1072 / DSM 3721 / NBRC 107634 / OCM 161 / Z-7303), this protein is FAD synthase.